The chain runs to 880 residues: Translation initiation factor IF-2 (880 aa).

Disordered stretches follow at residues 51–78, 93–116, and 142–293; these read KQHG…GSTG, YVKR…QAAN, and KEAD…FEKP. The span at 69–78 shows a compositional bias: polar residues; that stretch reads STLNVKGSTG. Positions 142–229 are enriched in basic and acidic residues; that stretch reads KEADEKAKKA…ARKKAAEGGD (88 aa). Residues 269-279 show a composition bias toward basic residues; the sequence is GRRTRRGKKQR. The 170-residue stretch at 380–549 folds into the tr-type G domain; that stretch reads SRAPVVTIMG…LLQAEMLDLS (170 aa). Residues 389–396 are G1; that stretch reads GHVDHGKT. 389 to 396 serves as a coordination point for GTP; the sequence is GHVDHGKT. A G2 region spans residues 414–418; the sequence is GITQH. Positions 435–438 are G3; sequence DTPG. GTP-binding positions include 435–439 and 489–492; these read DTPGH and NKID. The G4 stretch occupies residues 489–492; it reads NKID. The tract at residues 525–527 is G5; the sequence is SAK.

Belongs to the TRAFAC class translation factor GTPase superfamily. Classic translation factor GTPase family. IF-2 subfamily.

Its subcellular location is the cytoplasm. In terms of biological role, one of the essential components for the initiation of protein synthesis. Protects formylmethionyl-tRNA from spontaneous hydrolysis and promotes its binding to the 30S ribosomal subunits. Also involved in the hydrolysis of GTP during the formation of the 70S ribosomal complex. This is Translation initiation factor IF-2 from Psychromonas ingrahamii (strain DSM 17664 / CCUG 51855 / 37).